Reading from the N-terminus, the 259-residue chain is MTDLTAAAQRALSLMDLTTLNDNDTDEKVTALCHQAKSLAGNTAAICIYPRFIPLARKVLREQGTPEIRIATVTNFPHGHDDIDIALAETQAAIAYGADEVDVVFPYRALMASNEQVGFEMVKACKVACAEADVLLKVIIETGELKEASLIRKASEISINAGADFIKTSTGKVPVNATLASAEIMMKVIHEMGVGETVGFKPAGGVRTAEEAAQYLALADHIMGDKWVDARHFRFGASSLLGNLLNTLGHQGQKQSSHY.

The Proton donor/acceptor role is filled by Asp-102. Lys-167 functions as the Schiff-base intermediate with acetaldehyde in the catalytic mechanism. Lys-201 serves as the catalytic Proton donor/acceptor.

This sequence belongs to the DeoC/FbaB aldolase family. DeoC type 2 subfamily.

Its subcellular location is the cytoplasm. The catalysed reaction is 2-deoxy-D-ribose 5-phosphate = D-glyceraldehyde 3-phosphate + acetaldehyde. It participates in carbohydrate degradation; 2-deoxy-D-ribose 1-phosphate degradation; D-glyceraldehyde 3-phosphate and acetaldehyde from 2-deoxy-alpha-D-ribose 1-phosphate: step 2/2. Its function is as follows. Catalyzes a reversible aldol reaction between acetaldehyde and D-glyceraldehyde 3-phosphate to generate 2-deoxy-D-ribose 5-phosphate. This chain is Deoxyribose-phosphate aldolase, found in Photorhabdus laumondii subsp. laumondii (strain DSM 15139 / CIP 105565 / TT01) (Photorhabdus luminescens subsp. laumondii).